A 92-amino-acid chain; its full sequence is Small ribosomal subunit protein uS19 (92 aa).

It belongs to the universal ribosomal protein uS19 family.

Protein S19 forms a complex with S13 that binds strongly to the 16S ribosomal RNA. The polypeptide is Small ribosomal subunit protein uS19 (Paracidovorax citrulli (strain AAC00-1) (Acidovorax citrulli)).